Reading from the N-terminus, the 257-residue chain is MRPLVIKLGGILLDTPAAMENLFNALAKYLQNSDRSLLIVHGGGCVVDDLMKRLNLPVRKKNGLRVTPSDQIDIIVGALAGIANKTLVAQAAKFKLNPVGLCLGDGELTAAKQFDPELGHVAGVIARNPALLDNLLSGGFLPIISSIAVDENGLLMNVNADQAATAIASLIDADLVMLSDVDGVLDADKTLLSELNSAQIARLIENKVITDGMIVKVNAALDAAKILNRGVDIANWKYPEKLTALFAGEIIGTRIAP.

Substrate-binding positions include 43-44 (GG), R65, and N157.

It belongs to the acetylglutamate kinase family. ArgB subfamily.

Its subcellular location is the cytoplasm. The catalysed reaction is N-acetyl-L-glutamate + ATP = N-acetyl-L-glutamyl 5-phosphate + ADP. It functions in the pathway amino-acid biosynthesis; L-arginine biosynthesis; N(2)-acetyl-L-ornithine from L-glutamate: step 2/4. Catalyzes the ATP-dependent phosphorylation of N-acetyl-L-glutamate. In Actinobacillus succinogenes (strain ATCC 55618 / DSM 22257 / CCUG 43843 / 130Z), this protein is Acetylglutamate kinase.